Here is a 490-residue protein sequence, read N- to C-terminus: Beta-1,3-glucan-binding protein 1 (490 aa).

The signal sequence occupies residues 1-19 (MYKQTVVIFLLCFFICVSC). Residues 20 to 119 (YEVPPAKLEA…GEWTVTGYVD (100 aa)) form the CBM39 domain. One can recognise a GH16 domain in the interval 152-490 (PPTSQNTYPC…QVDYVRVYAL (339 aa)). Asn-372 carries N-linked (GlcNAc...) asparagine glycosylation.

It belongs to the insect beta-1,3-glucan binding protein family. As to quaternary structure, monomer. Hemolymph.

The protein resides in the secreted. In terms of biological role, plays a role in the recognition of invading microorganisms activating the phenoloxidase cascade. Binds specifically to beta-1,3-glucan. Binds the Aspergillus niger cell wall component alpha-1,3-glucan, a fungal pathogen-associated molecular pattern (PAMP) that activates the host immune response. The polypeptide is Beta-1,3-glucan-binding protein 1 (Galleria mellonella (Greater wax moth)).